Consider the following 918-residue polypeptide: Signal transduction histidine-protein kinase BarA (918 aa).

Residues 1-9 (MTNYSLRAR) are Cytoplasmic-facing. Residues 10–31 (MMILILAPTVLIGLLLSIFFVV) traverse the membrane as a helical segment. Over 32-176 (HRYNDLQRQL…KSVRLQQYKE (145 aa)) the chain is Periplasmic. Residues 177–196 (IFISSVMMLFCIGIALIFGW) form a helical membrane-spanning segment. Residues 197-918 (RLMRDVTGPI…VAREASKILG (722 aa)) lie on the Cytoplasmic side of the membrane. Positions 200–252 (RDVTGPIRNMVNTVDRIRRGQLDSRVEGFMLGELDMLKNGINSMAMSLAAYHE) constitute an HAMP domain. Residues 299–520 (NMSHELRTPL…TFWFHINLDL (222 aa)) enclose the Histidine kinase domain. His-302 carries the post-translational modification Phosphohistidine; by autocatalysis. The Response regulatory domain maps to 669–785 (TVMAVDDNPA…RLHNLLLRYK (117 aa)). Residue Asp-718 is modified to 4-aspartylphosphate. The HPt domain occupies 822 to 918 (KTDLARDMLQ…VAREASKILG (97 aa)). His-861 carries the phosphohistidine modification.

Post-translationally, activation requires a sequential transfer of a phosphate group from a His in the primary transmitter domain, to an Asp in the receiver domain and to a His in the secondary transmitter domain.

It is found in the cell inner membrane. It catalyses the reaction ATP + protein L-histidine = ADP + protein N-phospho-L-histidine.. Member of the two-component regulatory system UvrY/BarA involved in the regulation of carbon metabolism via the CsrA/CsrB regulatory system. Phosphorylates UvrY, probably via a four-step phosphorelay. The polypeptide is Signal transduction histidine-protein kinase BarA (barA) (Escherichia coli O157:H7).